The primary structure comprises 411 residues: Kelch domain-containing protein 10 (411 aa).

6 Kelch repeats span residues 72–133 (NLYV…LHGH), 135–186 (LLVF…IIHG), 187–239 (FLYV…HDGQ), 240–288 (RIYV…RRCH), 296–342 (EVFI…AVTP), and 345–388 (CMYI…YFPH).

It belongs to the KLHDC10 family. Component of a CRL2 E3 ubiquitin-protein ligase complex, also named ECS (Elongin BC-CUL2/5-SOCS-box protein) complex, composed of CUL2, Elongin BC (ELOB and ELOC), RBX1 and substrate-specific adapter KLHDC10.

The protein operates within protein modification; protein ubiquitination. In terms of biological role, substrate-recognition component of a Cul2-RING (CRL2) E3 ubiquitin-protein ligase complex of the DesCEND (destruction via C-end degrons) pathway, which recognizes a C-degron located at the extreme C terminus of target proteins, leading to their ubiquitination and degradation. The C-degron recognized by the DesCEND pathway is usually a motif of less than ten residues and can be present in full-length proteins, truncated proteins or proteolytically cleaved forms. The CRL2(KLHDC10) complex specifically recognizes proteins with a proline-glycine (Pro-Gly) or an alanine tail (CAT tail) at the C-terminus, leading to their ubiquitination and degradation. The CRL2(KLHDC10) complex is involved in the ribosome-associated quality control (RQC) pathway, which mediates the extraction of incompletely synthesized nascent chains from stalled ribosomes: CRL2(KLHDC10) acts downstream of NEMF and recognizes CAT tails associated with stalled nascent chains, leading to their ubiquitination and degradation. This Xenopus tropicalis (Western clawed frog) protein is Kelch domain-containing protein 10.